The chain runs to 393 residues: tRNA(Met) cytidine acetate ligase (393 aa).

Gly81, Asn142, and Arg167 together coordinate ATP.

Belongs to the TmcAL family.

The protein localises to the cytoplasm. The catalysed reaction is cytidine(34) in elongator tRNA(Met) + acetate + ATP = N(4)-acetylcytidine(34) in elongator tRNA(Met) + AMP + diphosphate. In terms of biological role, catalyzes the formation of N(4)-acetylcytidine (ac(4)C) at the wobble position of elongator tRNA(Met), using acetate and ATP as substrates. First activates an acetate ion to form acetyladenylate (Ac-AMP) and then transfers the acetyl group to tRNA to form ac(4)C34. The sequence is that of tRNA(Met) cytidine acetate ligase from Bacillus cereus (strain Q1).